The following is a 1174-amino-acid chain: PR domain zinc finger protein 15 (1174 aa).

The region spanning 75–185 (SNLEIRRLDD…AGTELRVWYA (111 aa)) is the SET domain. The disordered stretch occupies residues 252–307 (LPAGGQQHEAASEKEPDAPRMEPPTAAESKSIQSVMVTKEPKKKPRRGRKPKASKV). Positions 261-271 (AASEKEPDAPR) are enriched in basic and acidic residues. Residues 292-304 (PKKKPRRGRKPKA) show a composition bias toward basic residues. C2H2-type zinc fingers lie at residues 402-424 (HQCGTCSKVFQNSSNLSRHVRSH) and 434-457 (FKCEECSKLFSRKESLKQHVSYKH). The segment at 468 to 486 (YRCGSCGKTFRMESALEFH) adopts a C2H2-type 3; degenerate zinc-finger fold. 2 C2H2-type zinc fingers span residues 495 to 517 (FQCEMCFRFFSTNSNLSKHKKKH) and 522 to 544 (FACEVCSKMFYRKDVMLDHQRRH). Residue Lys-552 forms a Glycyl lysine isopeptide (Lys-Gly) (interchain with G-Cter in SUMO2) linkage. 2 C2H2-type zinc fingers span residues 571-593 (SGCPVCGKVFSCRSNMNKHLLTH) and 598-620 (YTCEICGRKFFRVDVLRDHIHVH). Residues 639 to 658 (IGISSEENDDNSDESADSEP) form a disordered region. Residues 644-655 (EENDDNSDESAD) show a composition bias toward acidic residues. 8 C2H2-type zinc fingers span residues 661-684 (YSCKRCQLTFGRGKEYLKHIMEVH), 689-711 (HGCSICHRRFALKATYHAHMVIH), 725-747 (HPCEICGRIFNSIGNLERHKLIH), 753-775 (HACEQCGKSFARKDMLKEHMRVH), 781-803 (YLCAECGKGMKTKHALRHHMKLH), 809-831 (YECKECHRKFAQKVNMLKHYKRH), 837-859 (FMCELCGKTFSERNTMETHKLIH), and 865-888 (WTCSVCDKKYVTEYMLQKHVQLTH). 2 disordered regions span residues 957–1007 (AEGK…GDET) and 1147–1174 (LQPPQAPAAPQQAVQPQVQNEQQQMYSY). The segment covering 962 to 973 (GKAAKRSHKRKQ) has biased composition (basic residues). Positions 1154–1174 (AAPQQAVQPQVQNEQQQMYSY) are enriched in low complexity.

Expressed in embryonic stem cells (ESCs) (at protein level).

The protein localises to the nucleus. In terms of biological role, sequence-specific DNA-binding transcriptional regulator. Plays a role as a molecular node in a transcriptional network regulating embryonic development and cell fate decision. Stimulates the expression of upstream key transcriptional activators and repressors of the Wnt/beta-catenin and MAPK/ERK pathways, respectively, that are essential for naive pluripotency and self-renewal maintenance of embryonic stem cells (ESCs). Specifically promotes SPRY1 and RSPO1 transcription activation through recognition and direct binding of a specific DNA sequence in their promoter regions. Also plays a role in induced pluripotent stem cells (iPSCs) reprogramming. Involved in early embryo development. In Mus musculus (Mouse), this protein is PR domain zinc finger protein 15.